The primary structure comprises 776 residues: Disintegrin and metalloproteinase domain-containing protein 7 (776 aa).

The N-terminal stretch at Met1–Gly23 is a signal peptide. Residues Val24–Thr176 constitute a propeptide that is removed on maturation. The Extracellular segment spans residues Gly26–Val669. Asn84, Asn167, and Asn174 each carry an N-linked (GlcNAc...) asparagine glycan. Positions Lys199 to Pro394 constitute a Peptidase M12B domain. Cystine bridges form between Cys310–Cys389, Cys350–Cys373, Cys352–Cys357, and Cys460–Cys480. In terms of domain architecture, Disintegrin spans Phe402–Asn488. Asn584, Asn629, and Asn665 each carry an N-linked (GlcNAc...) asparagine glycan. Residues Ala670–Ile690 form a helical membrane-spanning segment. Over Arg691–Lys776 the chain is Cytoplasmic. The disordered stretch occupies residues Thr757–Lys776.

In terms of assembly, interacts with ITM2B in sperm; the interaction increases following capacitation. Interacts with HSPA5 and CANX.

It localises to the membrane. Its function is as follows. Required for normal male fertility via maintenance of epithelial cell morphology in the caput epididymis and subsequently correct epididymis lumen structure required for sperm development. Plays a role in sperm motility, flagella morphology and tyrosine phosphorylation during sperm capacitance. Plays a role in normal expression levels of HSPA5, ITM2B and ADAM2 in sperm both prior to and post-capacitation. This is a non catalytic metalloprotease-like protein. This chain is Disintegrin and metalloproteinase domain-containing protein 7 (ADAM7), found in Macaca fascicularis (Crab-eating macaque).